The following is a 519-amino-acid chain: Protein BANP (519 aa).

Phosphoserine occurs at positions 19, 90, and 100. Residues 53-90 (IKTICLRLDSIEAKLQALEATCKSLEEKLDLVTNKQHS) are a coiled coil. Residue Lys133 forms a Glycyl lysine isopeptide (Lys-Gly) (interchain with G-Cter in SUMO2) linkage. The tract at residues 152 to 342 (NAVPGRRQNT…FSRRTPNSSS (191 aa)) is interaction with CUX1 and HDAC1. Positions 168–177 (GQEDSHHEDG) are enriched in basic and acidic residues. The interval 168-196 (GQEDSHHEDGESGSEASDSVSSCGQAGSQ) is disordered. Residues 180 to 189 (GSEASDSVSS) are compositionally biased toward low complexity. Residues 226 to 322 (EMRVRCAIIP…SKCRTAWRRK (97 aa)) enclose the BEN domain. Lys275 carries the N6-acetyllysine modification. Positions 327–364 (SLAVKSFSRRTPNSSSYCPSEPMMSTPPPASELPQPQP) are disordered. The segment covering 335-344 (RRTPNSSSYC) has biased composition (polar residues). Phosphothreonine is present on residues Thr337 and Thr352. The segment at 342–393 (SYCPSEPMMSTPPPASELPQPQPQPQALHYALANAQQVQIHQIGEDGQVQVG) is DNA-binding. Over residues 351 to 364 (STPPPASELPQPQP) the composition is skewed to pro residues.

It belongs to the BANP/SMAR1 family. In terms of assembly, part of a corepressor complex containing BANP, HDAC1, SIN3A, SIN3B, RBL1 and RBL2. Forms a trimeric complex in the nucleus consisting of BANP, HDAC6 and KHDRBS1/SAM68; HDAC6 keeps KHDRBS1 in a deacetylated state which inhibits the inclusion of CD44 alternate exons. The complex is disrupted by MAPK1/MAPK3-mediated phosphorylation of BANP which results in BANP export to the cytoplasm. This facilitates acetylation of KHDRBS1 and CD44 variant exon inclusion. Interacts with TP53. Interacts with CUX1/CDP. Interacts with HDAC1. MAPK1/MAPK3-mediated phosphorylation at Thr-337 and Thr-352 results in export to the cytoplasm. Down-regulated in breast cancer cell lines.

It localises to the nucleus. The protein localises to the nucleus speckle. The protein resides in the cytoplasm. Functionally, controls V(D)J recombination during T-cell development by repressing T-cell receptor (TCR) beta enhancer function. Binds to scaffold/matrix attachment region beta (S/MARbeta), an ATC-rich DNA sequence located upstream of the TCR beta enhancer. Represses cyclin D1 transcription by recruiting HDAC1 to its promoter, thereby diminishing H3K9ac, H3S10ph and H4K8ac levels. Promotes TP53 activation, which causes cell cycle arrest. Plays a role in the regulation of alternative splicing. Binds to CD44 pre-mRNA and negatively regulates the inclusion of CD44 proximal variable exons v2-v6 but has no effect on distal variable exons v7-v10. This Homo sapiens (Human) protein is Protein BANP (BANP).